We begin with the raw amino-acid sequence, 305 residues long: Ribosomal RNA small subunit methyltransferase H (305 aa).

S-adenosyl-L-methionine contacts are provided by residues 30–32 (GGH), aspartate 49, phenylalanine 74, aspartate 96, and glutamine 103.

This sequence belongs to the methyltransferase superfamily. RsmH family.

Its subcellular location is the cytoplasm. It catalyses the reaction cytidine(1402) in 16S rRNA + S-adenosyl-L-methionine = N(4)-methylcytidine(1402) in 16S rRNA + S-adenosyl-L-homocysteine + H(+). Functionally, specifically methylates the N4 position of cytidine in position 1402 (C1402) of 16S rRNA. In Francisella tularensis subsp. tularensis (strain FSC 198), this protein is Ribosomal RNA small subunit methyltransferase H.